The primary structure comprises 325 residues: MLSMLRTMTRLCFLLFFSVATSGCSAAAASSLEMLSREFETCAFSFSSLPRSCKEIKERCHSAGDGLYFLRTKNGVVYQTFCDMTSGGGGWTLVASVHENDMRGKCTVGDRWSSQQGNKADYPEGDGNWANYNTFGSAEAATSDDYKNPGYYDIQAKDLGIWHVPNKSPMQHWRNSALLRYRTNTGFLQRLGHNLFGIYQKYPVKYRSGKCWNDNGPAIPVVYDFGDAKKTASYYSPYGQREFVAGFVQFRVFNNERAANALCAGIKVTGCNTEHHCIGGGGFFPQGKPRQCGDFSAFDWDGYGTHVKSSCSREITEAAVLLFYR.

The first 26 residues, 1–26 (MLSMLRTMTRLCFLLFFSVATSGCSA), serve as a signal peptide directing secretion. Residues 44-267 (FSFSSLPRSC…AANALCAGIK (224 aa)) form the Fibrinogen C-terminal domain. A disulfide bridge links Cys53 with Cys82. The Ca(2+) site is built by His98, Glu99, Asp101, Gly104, Gly109, Asp110, and Asp145. 3 disulfides stabilise this stretch: Cys106–Cys292, Cys211–Cys271, and Cys263–Cys277. Asn272, Glu274, and Asp294 together coordinate Ca(2+). 274-275 (EH) is a binding site for a carbohydrate.

Expressed only in the small intestine.

The protein localises to the secreted. Its function is as follows. May play a role in the defense system against pathogens. The protein is Intelectin-2 (ITLN2) of Homo sapiens (Human).